Reading from the N-terminus, the 589-residue chain is Protein drl-1 (589 aa).

The segment at 1–51 (MHSEEKYLHIPNNTKYPEIIVEEEEEDPSEEERSELSETDDVATPLRPSDT) is disordered. A compositionally biased stretch (acidic residues) spans 20–41 (IVEEEEEDPSEEERSELSETDD). The Protein kinase domain maps to 97 to 373 (WRINEDVMKD…QNLLESHGSK (277 aa)). Helical transmembrane passes span 429–449 (GFIPFIRWYMSRILIFSVLLV), 456–476 (LCAALSLAAVAGGVFFAIFLI), and 491–511 (GFVVLIALILLPIIILLTTLC).

The protein belongs to the protein kinase superfamily. STE Ser/Thr protein kinase family. In terms of tissue distribution, expressed in vulval and body wall muscles, hypodermis, seam cells and tissues next to pharynx and anus.

The protein resides in the membrane. Functionally, negatively regulates lifespan and health span probably by participating in nutrient sensing. This is Protein drl-1 from Caenorhabditis elegans.